The chain runs to 395 residues: Chalcone synthase 1 (395 aa).

Val2 carries the N-acetylvaline modification. Residue Cys169 is part of the active site.

The protein belongs to the thiolase-like superfamily. Chalcone/stilbene synthases family.

The enzyme catalyses (E)-4-coumaroyl-CoA + 3 malonyl-CoA + 3 H(+) = 2',4,4',6'-tetrahydroxychalcone + 3 CO2 + 4 CoA. It participates in secondary metabolite biosynthesis; flavonoid biosynthesis. Its function is as follows. The primary product of this enzyme is 4,2',4',6'-tetrahydroxychalcone (also termed naringenin-chalcone or chalcone) which can under specific conditions spontaneously isomerize into naringenin. In Sinapis alba (White mustard), this protein is Chalcone synthase 1 (CHS1).